The sequence spans 331 residues: MKIFAYGIRDDEKPSLEEWKAANPEIEVDYTQELLTPETAKLAEGSDSAVVYQQLDYTRETLTALANVGVTNLSLRNVGTDNIDFDAAREFNFNISNVPVYSPNAIAEHSMLQLSRLLRRTKALDAKIAKRDLRWAPTTGREMRMQTVGVIGTGHIGRVAINILKGFGAKVIAYDKYPNAELQAEGLYVDTLDELYAQADAISLYVPGVPENHHLINADAIAKMKDGVVIMNAARGNLMDIDAIIDGLNSGKISDFGMDVYENEVACSMKIGLVKNSPDAKIADLIARENVMITPHTAFYTTKAVLEMVHQSFDAAVAFAKGEKPAIAVEY.

Residues 155-156, aspartate 175, 206-207, asparagine 212, 233-235, and aspartate 259 each bind NAD(+); these read HI, VP, and AAR. The active site involves arginine 235. Glutamate 264 is a catalytic residue. Histidine 296 serves as the catalytic Proton donor.

This sequence belongs to the D-isomer specific 2-hydroxyacid dehydrogenase family. As to quaternary structure, homodimer.

The enzyme catalyses (R)-lactate + NAD(+) = pyruvate + NADH + H(+). This chain is D-lactate dehydrogenase, found in Leuconostoc mesenteroides subsp. cremoris.